A 736-amino-acid polypeptide reads, in one-letter code: Cytosolic neutral trehalase (736 aa).

The segment at 1 to 47 (MSEAPQARRVGSVDDHSVYDDAKTYYTSEERHNNSRSGPRQRTYSQN) is disordered. A compositionally biased stretch (basic and acidic residues) spans 11–33 (GSVDDHSVYDDAKTYYTSEERHN). The span at 35-47 (SRSGPRQRTYSQN) shows a compositional bias: polar residues. Ca(2+) is bound by residues aspartate 92, aspartate 94, asparagine 96, glutamine 98, and aspartate 103. Substrate-binding positions include arginine 279, 286–287 (WD), asparagine 323, 332–334 (RSQ), glutamate 399, arginine 448, and glycine 451. Catalysis depends on proton donor/acceptor residues aspartate 453 and glutamate 657.

The protein belongs to the glycosyl hydrolase 37 family. Ca(2+) is required as a cofactor.

The protein resides in the cytoplasm. It carries out the reaction alpha,alpha-trehalose + H2O = alpha-D-glucose + beta-D-glucose. Its pathway is carbohydrate degradation. Its function is as follows. Hydrolyzes intracellular trehalose to glucose. Plays a role in pathogenicity, specifically in proliferation of invasive hyphae in rice blast disease. In Pyricularia oryzae (strain 70-15 / ATCC MYA-4617 / FGSC 8958) (Rice blast fungus), this protein is Cytosolic neutral trehalase (NTH1).